We begin with the raw amino-acid sequence, 269 residues long: Formamidopyrimidine-DNA glycosylase (269 aa).

Residue P2 is the Schiff-base intermediate with DNA of the active site. E3 (proton donor) is an active-site residue. Catalysis depends on K57, which acts as the Proton donor; for beta-elimination activity. DNA-binding residues include H90, R109, and K150. Residues 235 to 269 form an FPG-type zinc finger; that stretch reads QVYGRKGEPCRVCGTPIVATKHAQRATFYCRHCQK. R259 serves as the catalytic Proton donor; for delta-elimination activity.

This sequence belongs to the FPG family. Monomer. Zn(2+) is required as a cofactor.

It catalyses the reaction Hydrolysis of DNA containing ring-opened 7-methylguanine residues, releasing 2,6-diamino-4-hydroxy-5-(N-methyl)formamidopyrimidine.. The enzyme catalyses 2'-deoxyribonucleotide-(2'-deoxyribose 5'-phosphate)-2'-deoxyribonucleotide-DNA = a 3'-end 2'-deoxyribonucleotide-(2,3-dehydro-2,3-deoxyribose 5'-phosphate)-DNA + a 5'-end 5'-phospho-2'-deoxyribonucleoside-DNA + H(+). Involved in base excision repair of DNA damaged by oxidation or by mutagenic agents. Acts as a DNA glycosylase that recognizes and removes damaged bases. Has a preference for oxidized purines, such as 7,8-dihydro-8-oxoguanine (8-oxoG). Has AP (apurinic/apyrimidinic) lyase activity and introduces nicks in the DNA strand. Cleaves the DNA backbone by beta-delta elimination to generate a single-strand break at the site of the removed base with both 3'- and 5'-phosphates. This is Formamidopyrimidine-DNA glycosylase from Salmonella choleraesuis (strain SC-B67).